The chain runs to 340 residues: Uroporphyrinogen decarboxylase (340 aa).

Residues Arg-21 to Arg-25, Asp-71, Tyr-148, Ser-203, and His-316 contribute to the substrate site.

The protein belongs to the uroporphyrinogen decarboxylase family. As to quaternary structure, homodimer.

Its subcellular location is the cytoplasm. The enzyme catalyses uroporphyrinogen III + 4 H(+) = coproporphyrinogen III + 4 CO2. Its pathway is porphyrin-containing compound metabolism; protoporphyrin-IX biosynthesis; coproporphyrinogen-III from 5-aminolevulinate: step 4/4. Functionally, catalyzes the decarboxylation of four acetate groups of uroporphyrinogen-III to yield coproporphyrinogen-III. The chain is Uroporphyrinogen decarboxylase from Campylobacter jejuni subsp. jejuni serotype O:23/36 (strain 81-176).